Here is a 140-residue protein sequence, read N- to C-terminus: MTVIDANGLILGRLASTVAKQLLSGDEEIYIVNAEKAVISGSRATTLKEYRETRERGSTEFGPYFPKRPDRILKRTIRGMLPYKRARGRDAMSRLKVYVGVPTELKDTETITIADADMRLLSSSKYIELGEVSQKMGSKF.

Belongs to the universal ribosomal protein uL13 family. As to quaternary structure, part of the 50S ribosomal subunit.

This protein is one of the early assembly proteins of the 50S ribosomal subunit, although it is not seen to bind rRNA by itself. It is important during the early stages of 50S assembly. This chain is Large ribosomal subunit protein uL13, found in Methanosarcina barkeri (strain Fusaro / DSM 804).